Reading from the N-terminus, the 276-residue chain is Rhomboid protease GlpG (276 aa).

6 helical membrane-spanning segments follow: residues 94-114, 142-162, 169-189, 192-212, 229-249, and 250-270; these read GPVT…MSLI, IFMH…WYLG, LGSG…GYVQ, FSGP…GYVW, LIIF…GMSM, and ANGA…VDTL. Catalysis depends on Ser201, which acts as the Nucleophile. Residue His254 is part of the active site.

This sequence belongs to the peptidase S54 family.

The protein localises to the cell inner membrane. The catalysed reaction is Cleaves type-1 transmembrane domains using a catalytic dyad composed of serine and histidine that are contributed by different transmembrane domains.. Its function is as follows. Rhomboid-type serine protease that catalyzes intramembrane proteolysis. This Salmonella dublin (strain CT_02021853) protein is Rhomboid protease GlpG.